The chain runs to 190 residues: uncharacterized protein (190 aa).

One can recognise a Macro domain in the interval 1 to 185; it reads MITMFKIVRG…LALETIGLGD (185 aa).

This is an uncharacterized protein from Pyrococcus horikoshii (strain ATCC 700860 / DSM 12428 / JCM 9974 / NBRC 100139 / OT-3).